The sequence spans 161 residues: Nucleotide-binding protein swp_1151 (161 aa).

This sequence belongs to the YajQ family.

In terms of biological role, nucleotide-binding protein. In Shewanella piezotolerans (strain WP3 / JCM 13877), this protein is Nucleotide-binding protein swp_1151.